A 42-amino-acid chain; its full sequence is Iota-conotoxin-like R11.16 (42 aa).

4 cysteine pairs are disulfide-bonded: cysteine 5-cysteine 19, cysteine 12-cysteine 22, cysteine 18-cysteine 27, and cysteine 21-cysteine 36.

The protein belongs to the conotoxin I1 superfamily. Expressed by the venom duct.

The protein localises to the secreted. Iota-conotoxins bind to voltage-gated sodium channels (Nav) and act as agonists by shifting the voltage-dependence of activation to more hyperpolarized levels. Produces general excitatory symptoms. The polypeptide is Iota-conotoxin-like R11.16 (Conus radiatus (Rayed cone)).